The sequence spans 207 residues: ATP-dependent dethiobiotin synthetase BioD (207 aa).

11-16 serves as a coordination point for ATP; that stretch reads DVGKTF. Residue threonine 15 participates in Mg(2+) binding. Residue lysine 31 is part of the active site. Substrate is bound at residue serine 35. Residues aspartate 42, 95–98, and 155–156 contribute to the ATP site; these read ETSG and NQ. Aspartate 42 and glutamate 95 together coordinate Mg(2+).

It belongs to the dethiobiotin synthetase family. Homodimer. It depends on Mg(2+) as a cofactor.

The protein resides in the cytoplasm. It catalyses the reaction (7R,8S)-7,8-diammoniononanoate + CO2 + ATP = (4R,5S)-dethiobiotin + ADP + phosphate + 3 H(+). It participates in cofactor biosynthesis; biotin biosynthesis; biotin from 7,8-diaminononanoate: step 1/2. Catalyzes a mechanistically unusual reaction, the ATP-dependent insertion of CO2 between the N7 and N8 nitrogen atoms of 7,8-diaminopelargonic acid (DAPA, also called 7,8-diammoniononanoate) to form a ureido ring. In Chlamydia abortus (strain DSM 27085 / S26/3) (Chlamydophila abortus), this protein is ATP-dependent dethiobiotin synthetase BioD.